We begin with the raw amino-acid sequence, 266 residues long: 5'-nucleotidase SurE (266 aa).

A divalent metal cation-binding residues include Asp8, Asp9, Ser40, and Asn98.

It belongs to the SurE nucleotidase family. A divalent metal cation serves as cofactor.

Its subcellular location is the cytoplasm. It catalyses the reaction a ribonucleoside 5'-phosphate + H2O = a ribonucleoside + phosphate. In terms of biological role, nucleotidase that shows phosphatase activity on nucleoside 5'-monophosphates. This Parasynechococcus marenigrum (strain WH8102) protein is 5'-nucleotidase SurE.